The sequence spans 119 residues: Large ribosomal subunit protein bL20 (119 aa).

It belongs to the bacterial ribosomal protein bL20 family.

Its function is as follows. Binds directly to 23S ribosomal RNA and is necessary for the in vitro assembly process of the 50S ribosomal subunit. It is not involved in the protein synthesizing functions of that subunit. In Burkholderia ambifaria (strain MC40-6), this protein is Large ribosomal subunit protein bL20.